Consider the following 95-residue polypeptide: MRSPYDVLKKPVITERSMDLAQENKYTFVVEPKANKIEIKHAVEQLFNVKVLDVHTMNVKGKPKRMGKYAGRTADKKKAIVTLKEGDKIEIFEGV.

The protein belongs to the universal ribosomal protein uL23 family. As to quaternary structure, part of the 50S ribosomal subunit. Contacts protein L29, and trigger factor when it is bound to the ribosome.

In terms of biological role, one of the early assembly proteins it binds 23S rRNA. One of the proteins that surrounds the polypeptide exit tunnel on the outside of the ribosome. Forms the main docking site for trigger factor binding to the ribosome. In Heliobacterium modesticaldum (strain ATCC 51547 / Ice1), this protein is Large ribosomal subunit protein uL23.